The primary structure comprises 129 residues: Small ribosomal subunit protein uS11 (129 aa).

The protein belongs to the universal ribosomal protein uS11 family. In terms of assembly, part of the 30S ribosomal subunit. Interacts with proteins S7 and S18. Binds to IF-3.

Located on the platform of the 30S subunit, it bridges several disparate RNA helices of the 16S rRNA. Forms part of the Shine-Dalgarno cleft in the 70S ribosome. The polypeptide is Small ribosomal subunit protein uS11 (Pseudomonas fluorescens (strain SBW25)).